We begin with the raw amino-acid sequence, 476 residues long: MVRVRLAPSPTGTLHIGTARTAVFNWLFARNQNGSFLLRIEDTDKERSKPEFTQNILEGLQWLGLDWDGDPVIQSEQTERHRSAIQTLLEKGLAYRCYASEEELDAMRTQQKAANQAPRYDNRHRDLTPEQEAAFQAEGRDAVIRFRIDEHREIRWNDLVRGPMLWRGADLGGDMVVARRAPADQIGDPLYNLVVVIDDAAMAISHVIRGEDHIANTAKQLLLYEALSLPVPTFAHAPLILNPEGRKLSKRDGVTSINDFRAMGYTPEALANYMTLLGWSVPEGMNEIFTLEAAAKVFDFDRVNKAGAKFDWDKLNWLNAQVLHSWEPANLLNALAPLWADQGWTLPDTTGWSLSLVELLGPSLTLLNDGVDQAKPFFMEPALEDDALKQLDQEGAKACLQALLSTLEEAPWSGESIDQAQEMLKSAAATAGVKKGILMKSLRAALLGRLQGPDLLTTWSLLAQIGQDLPRLRRCL.

A 'HIGH' region motif is present at residues 8 to 18 (PSPTGTLHIGT). The 'KMSKS' region signature appears at 247–251 (KLSKR). Lysine 250 is an ATP binding site.

This sequence belongs to the class-I aminoacyl-tRNA synthetase family. Glutamate--tRNA ligase type 1 subfamily. In terms of assembly, monomer.

The protein localises to the cytoplasm. The enzyme catalyses tRNA(Glu) + L-glutamate + ATP = L-glutamyl-tRNA(Glu) + AMP + diphosphate. Its function is as follows. Catalyzes the attachment of glutamate to tRNA(Glu) in a two-step reaction: glutamate is first activated by ATP to form Glu-AMP and then transferred to the acceptor end of tRNA(Glu). The polypeptide is Glutamate--tRNA ligase (Synechococcus sp. (strain WH7803)).